We begin with the raw amino-acid sequence, 403 residues long: Vacuole membrane protein 1 homolog (403 aa).

Residues 7–33 (IVLSNEKDIQLRIQQLEERKEKRKNVK) are a coiled coil. Helical transmembrane passes span 65–85 (FLLF…YVPG), 102–122 (IWWV…LHTF), 150–170 (ANSF…WMIL), 175–195 (WAAL…YFVA), 240–260 (LIGN…NPLF), 263–283 (AGIT…ATFI), 294–314 (ACFV…SFIE), and 348–368 (VGLA…MSIV).

This sequence belongs to the VMP1 family.

Its subcellular location is the membrane. It is found in the endoplasmic reticulum. It carries out the reaction a 1,2-diacyl-sn-glycero-3-phospho-L-serine(in) = a 1,2-diacyl-sn-glycero-3-phospho-L-serine(out). The catalysed reaction is cholesterol(in) = cholesterol(out). The enzyme catalyses a 1,2-diacyl-sn-glycero-3-phosphocholine(in) = a 1,2-diacyl-sn-glycero-3-phosphocholine(out). It catalyses the reaction a 1,2-diacyl-sn-glycero-3-phosphoethanolamine(in) = a 1,2-diacyl-sn-glycero-3-phosphoethanolamine(out). In terms of biological role, phospholipid scramblase involved in lipid homeostasis and membrane dynamics processes. Required for autophagosome formation: participates in early stages of autophagosome biogenesis at the endoplasmic reticulum (ER) membrane by reequilibrating the leaflets of the ER as lipids are extracted. In addition to autophagy, involved in other processes in which phospholipid scramblase activity is required. This is Vacuole membrane protein 1 homolog from Dictyostelium discoideum (Social amoeba).